Reading from the N-terminus, the 508-residue chain is Fc receptor-like protein 2 (508 aa).

The first 19 residues, 1–19 (MLLWSLLVIFDAVTEQADS), serve as a signal peptide directing secretion. Ig-like C2-type domains lie at 20–98 (LTLV…SNIV), 109–187 (PVLT…HRIR), 201–290 (PISN…KVVN), and 300–387 (PVLT…VSIS). At 20-401 (LTLVAPSSVF…YRRDLMTAGV (382 aa)) the chain is on the extracellular side. A disulfide bond links Cys-128 and Cys-177. Asn-204, Asn-234, Asn-343, Asn-355, and Asn-365 each carry an N-linked (GlcNAc...) asparagine glycan. 2 disulfides stabilise this stretch: Cys-226–Cys-275 and Cys-321–Cys-368. The helical transmembrane segment at 402–422 (LWGLFGVLGFTGVALLLYALF) threads the bilayer. Topologically, residues 423–508 (HKISGESSAT…QVIYSSVKKS (86 aa)) are cytoplasmic. The disordered stretch occupies residues 429–453 (SSATNEPRGASRPNPQEFTYSSPTP). Residues 441–452 (PNPQEFTYSSPT) show a composition bias toward polar residues. 4 consecutive short sequence motifs (ITIM motif) follow at residues 446-451 (FTYSSP), 460-465 (PVYVNV), 472-477 (VVYSQV), and 500-505 (VIYSSV).

The tyrosine-phosphorylated isoform 2 interacts with PTPN6. In terms of processing, isoform 2 is N- and O-glycosylated, and phosphorylated. In terms of tissue distribution, expressed in the secondary lymphoid organs, spleen and lymph node. Expression is limited to the mature B-cell lines. Highly expressed in CD19 and within the mantle zones of the tonsil tissue. Isoform 2 is expressed in the spleen, peripheral blood and bone marrow. Isoform 2 and isoform 4 are expressed in B-cell lines. Preferentially expressed in memory B-cells (at protein level).

The protein localises to the cell membrane. In terms of biological role, may have an regulatory role in normal and neoplastic B cell development. The polypeptide is Fc receptor-like protein 2 (FCRL2) (Homo sapiens (Human)).